The primary structure comprises 208 residues: Uracil phosphoribosyltransferase (208 aa).

Residues arginine 78, arginine 103, and 130 to 138 contribute to the 5-phospho-alpha-D-ribose 1-diphosphate site; that span reads DPMLATGGS. Uracil-binding positions include isoleucine 193 and 198–200; that span reads GDA. Position 199 (aspartate 199) interacts with 5-phospho-alpha-D-ribose 1-diphosphate.

It belongs to the UPRTase family. The cofactor is Mg(2+).

It catalyses the reaction UMP + diphosphate = 5-phospho-alpha-D-ribose 1-diphosphate + uracil. It participates in pyrimidine metabolism; UMP biosynthesis via salvage pathway; UMP from uracil: step 1/1. Its activity is regulated as follows. Allosterically activated by GTP. In terms of biological role, catalyzes the conversion of uracil and 5-phospho-alpha-D-ribose 1-diphosphate (PRPP) to UMP and diphosphate. The sequence is that of Uracil phosphoribosyltransferase from Actinobacillus pleuropneumoniae serotype 5b (strain L20).